Reading from the N-terminus, the 2563-residue chain is Compactin diketide synthase mlcB (2563 aa).

Residues 29-450 (STPIAIVGMG…GSNAHVILES (422 aa)) form the Ketosynthase family 3 (KS3) domain. Active-site for beta-ketoacyl synthase activity residues include C202, H337, and H372. The tract at residues 568–915 (VFTGQGAQWH…TELISKGYGL (348 aa)) is acyl and malonyl transferase. Catalysis depends on S658, which acts as the For malonyltransferase activity. Residues 951-960 (EPRGSRESKQ) are compositionally biased toward basic and acidic residues. The segment at 951-971 (EPRGSRESKQRTHPPHTLIGS) is disordered. The tract at residues 966–1103 (HTLIGSRESL…GLIRSESERS (138 aa)) is N-terminal hotdog fold. Positions 966–1284 (HTLIGSRESL…FQSVGSSFSD (319 aa)) constitute a PKS/mFAS DH domain. H998 serves as the catalytic Proton acceptor; for dehydratase activity. Positions 998-1010 (HVVGSSIIFPGAG) are dehydratase-like. The C-terminal hotdog fold stretch occupies residues 1121–1284 (DNRSIDPNDL…FQSVGSSFSD (164 aa)). D1187 functions as the Proton donor; for dehydratase activity in the catalytic mechanism. The interval 1542–1579 (YDVVVACQVLHATRCMKRTLSNVRKLLKPGGNLILVET) is methyltransferase. In terms of domain architecture, Carrier spans 2485-2562 (EAISIVLKAM…GLVELVVAKC (78 aa)). O-(pantetheine 4'-phosphoryl)serine is present on S2522.

Pantetheine 4'-phosphate is required as a cofactor.

The catalysed reaction is holo-[2-methylbutanoate polyketide synthase] + 2 malonyl-CoA + S-adenosyl-L-methionine + 2 NADPH + 3 H(+) = (S)-2-methylbutanoyl-[2-methylbutanoate polyketide synthase] + S-adenosyl-L-homocysteine + 2 CO2 + 2 NADP(+) + 2 CoA + H2O. It functions in the pathway polyketide biosynthesis. In terms of biological role, diketide synthase; part of the gene cluster that mediates the biosynthesis of compactin, also known as mevastatin or ML-236B, and which acts as a potent competitive inhibitor of HMG-CoA reductase. Compactin biosynthesis is performed in two stages. The first stage is catalyzed by the nonaketide synthase mlcA, which belongs to type I polyketide synthases and catalyzes the iterative nine-step formation of the polyketide. This PKS stage is completed by the action of dehydrogenase mlcG, which catalyzes the NADPH-dependent reduction of the unsaturated tetra-, penta- and heptaketide intermediates that arise during the mlcA-mediated biosynthesis of the nonaketide chain and leads to dihydro-ML-236C carboxylate. Covalently bound dihydro-ML-236C carboxylate is released from mlcA by the mlcF esterase. Conversion of dihydro-ML-236C carboxylate into ML-236A carboxylate is subsequently performed with the participation of molecular oxygen and P450 monoogygenase mlcC. Finally, mlcH performs the conversion of ML-236A carboxylate to ML-236B/compactin carboxylate through the addition of the side-chain diketide moiety produced by the diketide synthase mlcB. This chain is Compactin diketide synthase mlcB (mlcB), found in Penicillium citrinum.